Consider the following 326-residue polypeptide: tRNA-dihydrouridine(20/20a) synthase (326 aa).

Residues 11 to 13 and Gln63 contribute to the FMN site; that span reads PML. The active-site Proton donor is Cys93. FMN contacts are provided by residues Lys132, His165, 205-207, and 227-228; these read NGG and GR.

This sequence belongs to the Dus family. DusA subfamily. FMN serves as cofactor.

The enzyme catalyses 5,6-dihydrouridine(20) in tRNA + NADP(+) = uridine(20) in tRNA + NADPH + H(+). The catalysed reaction is 5,6-dihydrouridine(20) in tRNA + NAD(+) = uridine(20) in tRNA + NADH + H(+). It catalyses the reaction 5,6-dihydrouridine(20a) in tRNA + NADP(+) = uridine(20a) in tRNA + NADPH + H(+). It carries out the reaction 5,6-dihydrouridine(20a) in tRNA + NAD(+) = uridine(20a) in tRNA + NADH + H(+). Catalyzes the synthesis of 5,6-dihydrouridine (D), a modified base found in the D-loop of most tRNAs, via the reduction of the C5-C6 double bond in target uridines. Specifically modifies U20 and U20a in tRNAs. This is tRNA-dihydrouridine(20/20a) synthase from Vibrio vulnificus (strain CMCP6).